A 264-amino-acid chain; its full sequence is Apolipoprotein A-I (264 aa).

Residues 1–18 (MKAVVLAVAVLFLTGSQA) form the signal peptide. 2 consecutive repeat copies span residues 67-88 (LNLL…EQLG) and 89-110 (SVTK…QQMN). The 10 X approximate tandem repeats stretch occupies residues 67-264 (LNLLANWNTL…DQASKQLSAQ (198 aa)). The residue at position 109 (Met109) is a Methionine sulfoxide. One copy of the 3; half-length repeat lies at 111–121 (KDLEEVKQKVQ). Tandem repeats lie at residues 122–142 (SYLD…RDKV), 144–165 (PLGK…EKLA), 166–187 (PLGQ…THLG), 188–208 (SYTQ…KESA), and 209–229 (PVSE…EKAK). Methionine sulfoxide is present on Met193. One copy of the 9; half-length repeat lies at 230-240 (PALEDLRQGLM). Met240 carries the methionine sulfoxide modification. Repeat 10 spans residues 241 to 264 (PVMESLKASFLSSIDQASKQLSAQ).

The protein belongs to the apolipoprotein A1/A4/E family. Homodimer. Interacts with APOA1BP and CLU. Component of a sperm activating protein complex (SPAP), consisting of APOA1, an immunoglobulin heavy chain, an immunoglobulin light chain and albumin. Interacts with NDRG1. Interacts with SCGB3A2. Interacts with NAXE and YJEFN3. Post-translationally, glycosylated. In terms of processing, palmitoylated. Phosphorylation sites are present in the extracellular medium. As to expression, major protein of plasma HDL, also found in chylomicrons.

The protein localises to the secreted. In terms of biological role, participates in the reverse transport of cholesterol from tissues to the liver for excretion by promoting cholesterol efflux from tissues and by acting as a cofactor for the lecithin cholesterol acyltransferase (LCAT). As part of the SPAP complex, activates spermatozoa motility. This is Apolipoprotein A-I (Apoa1) from Heterocephalus glaber (Naked mole rat).